Consider the following 553-residue polypeptide: Mucolipin-3 (553 aa).

Topologically, residues Met1–Lys62 are cytoplasmic. The tract at residues Lys52–Lys62 is interaction with phosphoinositides. Residues Leu63 to Ser83 form a helical membrane-spanning segment. Residues Asn84–His283 are Extracellular-facing. Positions Lys104–Thr118 are extracellular/lumenal pore loop. The N-linked (GlcNAc...) asparagine glycan is linked to Asn138. An intrachain disulfide couples Cys159 to Cys185. A glycan (N-linked (GlcNAc...) asparagine) is linked at Asn205. Cys238 and Cys269 are disulfide-bonded. Residues Asn284–Ile304 form a helical membrane-spanning segment. The Cytoplasmic portion of the chain corresponds to Arg305–Trp341. Residues Tyr342–Ile362 traverse the membrane as a helical segment. Topologically, residues Gln363 to Asp371 are extracellular. Residues Val372–Leu392 form a helical membrane-spanning segment. Residues Gly393–Arg414 are Cytoplasmic-facing. A helical membrane pass occupies residues Phe415–Gly435. The Extracellular portion of the chain corresponds to Pro436 to Ser443. Residues Leu444–Phe464 constitute an intramembrane region (pore-forming). A Selectivity filter motif is present at residues Asn456–Asp459. Over Ala465–Trp475 the chain is Extracellular. A helical transmembrane segment spans residues Leu476 to Phe497. At Ile498–Lys553 the chain is on the cytoplasmic side.

Belongs to the transient receptor (TC 1.A.4) family. Polycystin subfamily. MCOLN3 sub-subfamily. Homotetramer. Can heterooligomerize with MCOLN1; heteromeric assemblies have different channel properties as compared to the respective homooligomers and may be tissue-specific. May heterooligomerize with TRPV5 to form a functional distinct ion channel. Interacts with GABARAPL2. N-glycosylated.

It localises to the lysosome membrane. Its subcellular location is the early endosome membrane. It is found in the late endosome membrane. The protein localises to the cytoplasmic vesicle. The protein resides in the autophagosome membrane. It localises to the cell projection. Its subcellular location is the stereocilium membrane. The catalysed reaction is Ca(2+)(in) = Ca(2+)(out). It catalyses the reaction Mg(2+)(in) = Mg(2+)(out). It carries out the reaction K(+)(in) = K(+)(out). The enzyme catalyses Na(+)(in) = Na(+)(out). Its activity is regulated as follows. Channel activity is activated by PtdIns(3,5)P2 (phosphatidylinositol 3,5-bisphosphate). Inhibited by lumenal H(+) and Na(+). The channel pore shows dynamic behavior and undergoes spontaneous, Ca(2+)-dependent modulation when conducting Ca(2+). Functionally, nonselective cation channel probably playing a role in the regulation of membrane trafficking events. Acts as a Ca(2+)-permeable cation channel with inwardly rectifying activity. Mediates release of Ca(2+) from endosomes to the cytoplasm, contributes to endosomal acidification and is involved in the regulation of membrane trafficking and fusion in the endosomal pathway. Also permeable to Mg(2+), Na(+) and K(+). Does not seem to act as mechanosensory transduction channel in inner ear sensory hair cells. Proposed to play a critical role at the cochlear stereocilia ankle-link region during hair-bundle growth. Involved in the regulation of autophagy. Through association with GABARAPL2 may be involved in autophagosome formation possibly providing Ca(2+) for the fusion process. Through a possible and probably tissue-specific heteromerization with MCOLN1 may be at least in part involved in many lysosome-dependent cellular events. Possible heteromeric ion channel assemblies with TRPV5 show pharmacological similarity with TRPML3. The chain is Mucolipin-3 from Callithrix jacchus (White-tufted-ear marmoset).